Reading from the N-terminus, the 52-residue chain is uncharacterized protein (52 aa).

This is an uncharacterized protein from Bacillus subtilis (strain 168).